Here is an 817-residue protein sequence, read N- to C-terminus: U3 small nucleolar RNA-associated protein 13 (817 aa).

WD repeat units follow at residues Glu-59–Lys-100, Ser-102–Ser-139, Gly-142–Gln-187, Ser-191–Leu-233, Pro-238–Arg-280, Gly-386–Asp-425, Gly-432–Asp-476, Ala-489–Thr-528, Asn-531–Glu-572, Gly-573–Asp-614, His-616–Glu-654, and Glu-664–Ser-705.

Interacts with snoRNA U3. Interacts with MPP10. Component of the ribosomal small subunit (SSU) processome composed of at least 40 protein subunits and snoRNA U3.

It is found in the nucleus. Its subcellular location is the nucleolus. Its function is as follows. Involved in nucleolar processing of pre-18S ribosomal RNA. In Saccharomyces cerevisiae (strain ATCC 204508 / S288c) (Baker's yeast), this protein is U3 small nucleolar RNA-associated protein 13 (UTP13).